A 301-amino-acid polypeptide reads, in one-letter code: Protein ARMCX6 (301 aa).

Residues 1–6 are mitochondrion outer membrane (MOM)-targeting sequence; it reads MGRARE. Residues 1 to 7 are Mitochondrial intermembrane-facing; it reads MGRAREM. The chain crosses the membrane as a helical; Signal-anchor span at residues 8-25; sequence GWMAAGLMIGAGACYCMY. Residues 26-36 form a mitochondrion outer membrane (MOM)-targeting sequence region; the sequence is KLTMGRDEGNE. Topologically, residues 26–301 are cytoplasmic; the sequence is KLTMGRDEGN…REMLVEAISP (276 aa). The interval 70 to 105 is disordered; sequence SEDGEWDEPGAPGGTEDRRSGGGKANRAHPTKQRPF.

This sequence belongs to the eutherian X-chromosome-specific Armcx family.

The protein resides in the mitochondrion. It localises to the mitochondrion outer membrane. May regulate the dynamics and distribution of mitochondria in neural cells. This Rattus norvegicus (Rat) protein is Protein ARMCX6 (Armcx6).